The sequence spans 52 residues: KKKRGWDTPAPCHYCQWKGPQCCVYYCSSCNYEEAREEGHYVSSHLLERQGR.

Residues 1–4 constitute a propeptide that is removed on maturation; sequence KKKR. 3 cysteine pairs are disulfide-bonded: C12–C23, C15–C27, and C22–C30. The residue at position 50 (Q50) is a Glutamine amide.

As to expression, expressed by the venom duct.

The protein localises to the secreted. Functionally, probable neurotoxin with unknown target. Possibly targets ion channels. This chain is Conotoxin Cal6.3b, found in Californiconus californicus (California cone).